We begin with the raw amino-acid sequence, 221 residues long: Transcriptional regulatory protein QseB (221 aa).

The region spanning 2–116 (RILLIEDDNL…EVAARLQALI (115 aa)) is the Response regulatory domain. Asp51 carries the post-translational modification 4-aspartylphosphate. The ompR/PhoB-type DNA-binding region spans 124–218 (HSVIEQAGVK…VHGVGYALGQ (95 aa)).

In terms of processing, phosphorylated by QseC.

The protein resides in the cytoplasm. Its function is as follows. Member of a two-component regulatory system QseB/QseC. The protein is Transcriptional regulatory protein QseB (qseB) of Haemophilus influenzae (strain ATCC 51907 / DSM 11121 / KW20 / Rd).